Here is a 270-residue protein sequence, read N- to C-terminus: Plasmanylethanolamine desaturase 1 (270 aa).

The next 3 helical transmembrane spans lie at 47–67, 74–94, and 161–181; these read WCSV…LLLL, PLVI…SGLV, and ALEQ…FGTF. The Histidine box-1 signature appears at 186 to 190; it reads HKWSH. The short motif at 213–217 is the Histidine box-2 element; it reads HHRIH.

Belongs to the fatty acid desaturase CarF family.

It localises to the endoplasmic reticulum membrane. It catalyses the reaction a 1-(1,2-saturated alkyl)-2-acyl-sn-glycero-3-phosphoethanolamine + 2 Fe(II)-[cytochrome b5] + O2 + 2 H(+) = a 1-O-(1Z-alkenyl)-2-acyl-sn-glycero-3-phosphoethanolamine + 2 Fe(III)-[cytochrome b5] + 2 H2O. The enzyme catalyses a 1-O-hexadecyl-2-acyl-sn-glycero-3-phosphoethanolamine + 2 Fe(II)-[cytochrome b5] + O2 + 2 H(+) = a 1-O-(1Z-hexadecenyl)-2-acyl-sn-glycero-3-phosphoethanolamine + 2 Fe(III)-[cytochrome b5] + 2 H2O. It carries out the reaction a 1-O-octadecyl-2-acyl-sn-glycero-3-phosphoethanolamine + 2 Fe(II)-[cytochrome b5] + O2 + 2 H(+) = a 1-O-(1Z-octadecenyl)-2-acyl-sn-glycero-3-phosphoethanolamine + 2 Fe(III)-[cytochrome b5] + 2 H2O. The catalysed reaction is a 1-O-(9Z-octadecenyl)-2-acyl-sn-glycero-3-phosphoethanolamine + 2 Fe(II)-[cytochrome b5] + O2 + 2 H(+) = a 1-O-(1Z,9Z-octadecadienyl)-2-acyl-sn-glycero-3-phosphoethanolamine + 2 Fe(III)-[cytochrome b5] + 2 H2O. The protein operates within lipid metabolism; fatty acid metabolism. In terms of biological role, plasmanylethanolamine desaturase involved in plasmalogen biogenesis in the endoplasmic reticulum membrane. Plasmalogens are glycerophospholipids with a hydrocarbon chain linked by a vinyl ether bond at the glycerol sn-1 position, and are involved in antioxidative and signaling mechanisms. This Homo sapiens (Human) protein is Plasmanylethanolamine desaturase 1.